We begin with the raw amino-acid sequence, 136 residues long: Immunoglobulin J chain (136 aa).

3 disulfides stabilise this stretch: Cys12–Cys100, Cys71–Cys91, and Cys108–Cys133. Asn48 carries N-linked (GlcNAc...) (complex) asparagine glycosylation.

In terms of assembly, part of the secretory IgA (sIgA) complex that consists of two, four or five IgA monomers, and two additional non-Ig polypeptides, namely the JCHAIN and the secretory component (the proteolytic product of PIGR). Part of the secretory IgM (sIgM) complex that consist of five IgM monomers, and two additional non-Ig polypeptides, namely the JCHAIN and the secretory component (the proteolytic product of PIGR). JCHAIN-containing IgM interacts (via CH4 domain) with FCRM (via Ig-like domain).

It is found in the secreted. Functionally, serves to link two monomer units of either IgM or IgA. In the case of IgM, the J chain-joined dimer is a nucleating unit for the IgM pentamer, and in the case of IgA it induces dimers and/or larger polymers. It also helps to bind these immunoglobulins to secretory component. In Oryctolagus cuniculus (Rabbit), this protein is Immunoglobulin J chain.